We begin with the raw amino-acid sequence, 299 residues long: Putative hydrolase YtaP (299 aa).

It belongs to the dienelactone hydrolase family.

The chain is Putative hydrolase YtaP (ytaP) from Bacillus subtilis (strain 168).